A 261-amino-acid polypeptide reads, in one-letter code: Kallikrein 1-related peptidase b21 (261 aa).

A signal peptide spans 1–17; it reads MRFLILFLALSLGEIDA. A propeptide spans 18 to 24 (activation peptide); sequence APPVQSR. The Peptidase S1 domain occupies 25 to 258; that stretch reads IVGGFNCEKN…FTSWIKDTMA (234 aa). 5 disulfide bridges follow: cysteine 31–cysteine 173, cysteine 50–cysteine 66, cysteine 152–cysteine 219, cysteine 184–cysteine 198, and cysteine 209–cysteine 234. The active-site Charge relay system is histidine 65. Asparagine 102 is a glycosylation site (N-linked (GlcNAc...) asparagine). Aspartate 120 acts as the Charge relay system in catalysis. Residue serine 213 is the Charge relay system of the active site.

It belongs to the peptidase S1 family. Kallikrein subfamily. Expressed in testis and submaxillary gland. In the testis, expression localized specifically to Leydig cells in the interstitial tissues.

It carries out the reaction Preferential cleavage of Arg-|-Xaa bonds in small molecule substrates. Highly selective action to release kallidin (lysyl-bradykinin) from kininogen involves hydrolysis of Met-|-Xaa or Leu-|-Xaa.. Inhibited by protease inhibitors diisopropylfluorophosphate, leupeptin, antipain, benzamidine, phenylmethylsulfonyl fluoride and soybean trypsin inhibitor. Its function is as follows. Glandular kallikreins cleave Met-Lys and Arg-Ser bonds in kininogen to release Lys-bradykinin. Displays trypsin-like substrate specificity and shows activity towards casein, gelatin, fibronectin and IGFBP3. The sequence is that of Kallikrein 1-related peptidase b21 (Klk1b21) from Mus musculus (Mouse).